The primary structure comprises 668 residues: UvrABC system protein B (668 aa).

The 388-residue stretch at 36–423 (DNIKGGEKAQ…TETVVEQIIR (388 aa)) folds into the Helicase ATP-binding domain. 49–56 (GATGTGKT) lines the ATP pocket. The Beta-hairpin signature appears at 102–125 (YYDYYQPEAYVPSSDTYIEKDSSI). The Helicase C-terminal domain maps to 440–606 (QMDDLLGEIN…TIKKEIRDLI (167 aa)). The region spanning 632–667 (QEAIKKLQKQMHEAAELLDFELAAQIRDMVLELKSM) is the UVR domain.

This sequence belongs to the UvrB family. As to quaternary structure, forms a heterotetramer with UvrA during the search for lesions. Interacts with UvrC in an incision complex.

Its subcellular location is the cytoplasm. Its function is as follows. The UvrABC repair system catalyzes the recognition and processing of DNA lesions. A damage recognition complex composed of 2 UvrA and 2 UvrB subunits scans DNA for abnormalities. Upon binding of the UvrA(2)B(2) complex to a putative damaged site, the DNA wraps around one UvrB monomer. DNA wrap is dependent on ATP binding by UvrB and probably causes local melting of the DNA helix, facilitating insertion of UvrB beta-hairpin between the DNA strands. Then UvrB probes one DNA strand for the presence of a lesion. If a lesion is found the UvrA subunits dissociate and the UvrB-DNA preincision complex is formed. This complex is subsequently bound by UvrC and the second UvrB is released. If no lesion is found, the DNA wraps around the other UvrB subunit that will check the other stand for damage. The protein is UvrABC system protein B of Streptococcus thermophilus (strain CNRZ 1066).